Here is a 905-residue protein sequence, read N- to C-terminus: Protein translocase subunit SecA (905 aa).

Residues Gln-87, 105 to 109 (GEGKT), and Asp-512 contribute to the ATP site. The disordered stretch occupies residues 836–905 (DVDAVDEQRK…KKYKHCHGKL (70 aa)). Residues 841–858 (DEQRKAADSAPREFRHEQ) show a composition bias toward basic and acidic residues. Zn(2+) contacts are provided by Cys-890, Cys-892, Cys-901, and His-902. A compositionally biased stretch (basic residues) spans 896-905 (KKYKHCHGKL).

Belongs to the SecA family. As to quaternary structure, monomer and homodimer. Part of the essential Sec protein translocation apparatus which comprises SecA, SecYEG and auxiliary proteins SecDF-YajC and YidC. Zn(2+) serves as cofactor.

The protein localises to the cell inner membrane. It localises to the cytoplasm. It carries out the reaction ATP + H2O + cellular proteinSide 1 = ADP + phosphate + cellular proteinSide 2.. Its function is as follows. Part of the Sec protein translocase complex. Interacts with the SecYEG preprotein conducting channel. Has a central role in coupling the hydrolysis of ATP to the transfer of proteins into and across the cell membrane, serving both as a receptor for the preprotein-SecB complex and as an ATP-driven molecular motor driving the stepwise translocation of polypeptide chains across the membrane. The chain is Protein translocase subunit SecA from Idiomarina loihiensis (strain ATCC BAA-735 / DSM 15497 / L2-TR).